We begin with the raw amino-acid sequence, 569 residues long: Urease subunit alpha (569 aa).

Positions 131–569 constitute a Urease domain; sequence GGMDAHIHFI…LPMAQRYFLF (439 aa). Ni(2+)-binding residues include His136, His138, and Lys218. The residue at position 218 (Lys218) is an N6-carboxylysine. His220 is a binding site for substrate. Residues His247 and His273 each coordinate Ni(2+). His321 functions as the Proton donor in the catalytic mechanism. Asp361 contributes to the Ni(2+) binding site.

It belongs to the metallo-dependent hydrolases superfamily. Urease alpha subunit family. In terms of assembly, heterotrimer of UreA (gamma), UreB (beta) and UreC (alpha) subunits. Three heterotrimers associate to form the active enzyme. Ni cation serves as cofactor. In terms of processing, carboxylation allows a single lysine to coordinate two nickel ions.

The protein resides in the cytoplasm. The catalysed reaction is urea + 2 H2O + H(+) = hydrogencarbonate + 2 NH4(+). It participates in nitrogen metabolism; urea degradation; CO(2) and NH(3) from urea (urease route): step 1/1. This is Urease subunit alpha from Rhizobium rhizogenes (strain K84 / ATCC BAA-868) (Agrobacterium radiobacter).